The sequence spans 203 residues: Holliday junction branch migration complex subunit RuvA (203 aa).

The interval 1–63 is domain I; that stretch reads MIFSVRGEVL…EDSMTLYGFS (63 aa). The segment at 64 to 141 is domain II; the sequence is DAENRDLFLA…GPVGASGLTV (78 aa). The interval 141–145 is flexible linker; sequence VGTAA. Residues 146 to 203 are domain III; the sequence is DGNAVRGSVVEALVGLGFAAKQAEEATDQVLDGELGKDGAVATSSALRAALSLLGKTR.

Belongs to the RuvA family. In terms of assembly, homotetramer. Forms an RuvA(8)-RuvB(12)-Holliday junction (HJ) complex. HJ DNA is sandwiched between 2 RuvA tetramers; dsDNA enters through RuvA and exits via RuvB. An RuvB hexamer assembles on each DNA strand where it exits the tetramer. Each RuvB hexamer is contacted by two RuvA subunits (via domain III) on 2 adjacent RuvB subunits; this complex drives branch migration. In the full resolvosome a probable DNA-RuvA(4)-RuvB(12)-RuvC(2) complex forms which resolves the HJ.

The protein localises to the cytoplasm. Its function is as follows. The RuvA-RuvB-RuvC complex processes Holliday junction (HJ) DNA during genetic recombination and DNA repair, while the RuvA-RuvB complex plays an important role in the rescue of blocked DNA replication forks via replication fork reversal (RFR). RuvA specifically binds to HJ cruciform DNA, conferring on it an open structure. The RuvB hexamer acts as an ATP-dependent pump, pulling dsDNA into and through the RuvAB complex. HJ branch migration allows RuvC to scan DNA until it finds its consensus sequence, where it cleaves and resolves the cruciform DNA. This is Holliday junction branch migration complex subunit RuvA from Mycobacterium leprae (strain Br4923).